We begin with the raw amino-acid sequence, 72 residues long: Large ribosomal subunit protein uL29 (72 aa).

This sequence belongs to the universal ribosomal protein uL29 family. As to quaternary structure, part of the 50S ribosomal subunit.

The protein is Large ribosomal subunit protein uL29 of Pyrococcus furiosus (strain ATCC 43587 / DSM 3638 / JCM 8422 / Vc1).